Here is a 342-residue protein sequence, read N- to C-terminus: Autoinducer 2 import system permease protein LsrC (342 aa).

The Periplasmic segment spans residues 1–13 (MLKFIQNNREITA). The helical transmembrane segment at 14–34 (LLAVVLLFVLPGFLDRQYLSV) threads the bilayer. The Cytoplasmic segment spans residues 35-38 (QTLT). A helical membrane pass occupies residues 39–59 (MVYSSAQILILLAMGATLVML). Residues 60 to 69 (TRNIDVSVGS) are Periplasmic-facing. The helical transmembrane segment at 70–90 (ITGMCAVLLGMLLNAGYSLPV) threads the bilayer. Residues 91 to 92 (AC) lie on the Cytoplasmic side of the membrane. A helical membrane pass occupies residues 93 to 113 (VATLLLGLLAGFFNGVLVAWL). A topological domain (periplasmic) is located at residue Lys-114. A helical membrane pass occupies residues 115-135 (IPAIVATLGTLGLYRGIMLLW). The Cytoplasmic portion of the chain corresponds to 136–154 (TGGKWIEGLPAELKQLSAP). A helical transmembrane segment spans residues 155 to 175 (LLFGVSAIGWLTIILVAFMAW). Topologically, residues 176–212 (LLAKTAFGRSFYVTGDNLQGARQLGVRTEAIRIVAFS) are periplasmic. A helical transmembrane segment spans residues 213 to 233 (LNGCMAALAGIVFASQIGFIP). The Cytoplasmic segment spans residues 234–251 (NQTGTGLEMKAIAACVLG). Residues 252-272 (GISLLGGSGAIIGAVLGAWFL) traverse the membrane as a helical segment. Topologically, residues 273 to 283 (TQIDSVLVLLR) are periplasmic. A helical transmembrane segment spans residues 284 to 304 (IPAWWNDFIAGMVLLAVLVFD). Topologically, residues 305 to 342 (GRLRCALERNLRRQKYARFMMPPPPVKPASSGKKREAA) are cytoplasmic.

Belongs to the binding-protein-dependent transport system permease family. AraH/RbsC subfamily. The complex is composed of two ATP-binding proteins (LsrA), two transmembrane proteins (LsrC and LsrD) and a solute-binding protein (LsrB).

The protein resides in the cell inner membrane. Its function is as follows. Part of the ABC transporter complex LsrABCD involved in autoinducer 2 (AI-2) import. Probably responsible for the translocation of the substrate across the membrane. The polypeptide is Autoinducer 2 import system permease protein LsrC (lsrC) (Escherichia coli (strain SMS-3-5 / SECEC)).